A 59-amino-acid polypeptide reads, in one-letter code: Cytochrome c oxidase subunit 7 (59 aa).

At Met1 to Pro24 the chain is on the mitochondrial matrix side. Residues Gly25–Ala47 form a helical membrane-spanning segment. Topologically, residues Ser48–Phe59 are mitochondrial intermembrane.

It belongs to the cytochrome c oxidase subunit 7 family. In terms of assembly, component of the cytochrome c oxidase (complex IV, CIV), a multisubunit enzyme composed of a catalytic core of 3 subunits and several supernumerary subunits. The complex exists as a monomer or a dimer and forms supercomplexes (SCs) in the inner mitochondrial membrane with ubiquinol-cytochrome c oxidoreductase (cytochrome b-c1 complex, complex III, CIII).

It is found in the mitochondrion inner membrane. The protein operates within energy metabolism; oxidative phosphorylation. Its function is as follows. Component of the cytochrome c oxidase, the last enzyme in the mitochondrial electron transport chain which drives oxidative phosphorylation. The respiratory chain contains 3 multisubunit complexes succinate dehydrogenase (complex II, CII), ubiquinol-cytochrome c oxidoreductase (cytochrome b-c1 complex, complex III, CIII) and cytochrome c oxidase (complex IV, CIV), that cooperate to transfer electrons derived from NADH and succinate to molecular oxygen, creating an electrochemical gradient over the inner membrane that drives transmembrane transport and the ATP synthase. Cytochrome c oxidase is the component of the respiratory chain that catalyzes the reduction of oxygen to water. Electrons originating from reduced cytochrome c in the intermembrane space (IMS) are transferred via the dinuclear copper A center (CU(A)) of subunit 2 and heme A of subunit 1 to the active site in subunit 1, a binuclear center (BNC) formed by heme A3 and copper B (CU(B)). The BNC reduces molecular oxygen to 2 water molecules using 4 electrons from cytochrome c in the IMS and 4 protons from the mitochondrial matrix. In Schizosaccharomyces pombe (strain 972 / ATCC 24843) (Fission yeast), this protein is Cytochrome c oxidase subunit 7 (cox7).